The primary structure comprises 252 residues: Imidazole glycerol phosphate synthase subunit HisF (252 aa).

Catalysis depends on residues aspartate 11 and aspartate 130.

This sequence belongs to the HisA/HisF family. In terms of assembly, heterodimer of HisH and HisF.

Its subcellular location is the cytoplasm. The enzyme catalyses 5-[(5-phospho-1-deoxy-D-ribulos-1-ylimino)methylamino]-1-(5-phospho-beta-D-ribosyl)imidazole-4-carboxamide + L-glutamine = D-erythro-1-(imidazol-4-yl)glycerol 3-phosphate + 5-amino-1-(5-phospho-beta-D-ribosyl)imidazole-4-carboxamide + L-glutamate + H(+). It participates in amino-acid biosynthesis; L-histidine biosynthesis; L-histidine from 5-phospho-alpha-D-ribose 1-diphosphate: step 5/9. Functionally, IGPS catalyzes the conversion of PRFAR and glutamine to IGP, AICAR and glutamate. The HisF subunit catalyzes the cyclization activity that produces IGP and AICAR from PRFAR using the ammonia provided by the HisH subunit. In Azobacteroides pseudotrichonymphae genomovar. CFP2, this protein is Imidazole glycerol phosphate synthase subunit HisF.